A 380-amino-acid polypeptide reads, in one-letter code: Cytochrome b (380 aa).

A run of 4 helical transmembrane segments spans residues 34-54 (FGSLLGICLLTQILTGLLLAM), 78-99 (WLIRNLHANGASFFFICIYLHI), 114-134 (WNTGVILLLTLMATAFVGYVL), and 179-199 (FFALHFLLPFMIAGLTLIHLT). Heme b-binding residues include H84 and H98. 2 residues coordinate heme b: H183 and H197. H202 lines the a ubiquinone pocket. The next 4 membrane-spanning stretches (helical) occupy residues 227 to 247 (LKDILGFMLMLLPLTTLALFS), 289 to 309 (LGGVLALAASVLVLFLAPFLH), 321 to 341 (LSQLLFWILVANLFILTWVGS), and 348 to 368 (FIIIGQLASITYFTILLILFP).

The protein belongs to the cytochrome b family. The cytochrome bc1 complex contains 11 subunits: 3 respiratory subunits (MT-CYB, CYC1 and UQCRFS1), 2 core proteins (UQCRC1 and UQCRC2) and 6 low-molecular weight proteins (UQCRH/QCR6, UQCRB/QCR7, UQCRQ/QCR8, UQCR10/QCR9, UQCR11/QCR10 and a cleavage product of UQCRFS1). This cytochrome bc1 complex then forms a dimer. Requires heme b as cofactor.

The protein localises to the mitochondrion inner membrane. Functionally, component of the ubiquinol-cytochrome c reductase complex (complex III or cytochrome b-c1 complex) that is part of the mitochondrial respiratory chain. The b-c1 complex mediates electron transfer from ubiquinol to cytochrome c. Contributes to the generation of a proton gradient across the mitochondrial membrane that is then used for ATP synthesis. This Ardenna tenuirostris (Short-tailed shearwater) protein is Cytochrome b (MT-CYB).